A 232-amino-acid polypeptide reads, in one-letter code: Zinc import ATP-binding protein ZnuC (232 aa).

Residues 5–220 (VNLKNIFVFY…PSFIEMFGCY (216 aa)) enclose the ABC transporter domain. An ATP-binding site is contributed by 37–44 (GPNGSGKS).

It belongs to the ABC transporter superfamily. Zinc importer (TC 3.A.1.15.5) family. In terms of assembly, the complex is composed of two ATP-binding proteins (ZnuC), two transmembrane proteins (ZnuB) and a solute-binding protein (ZnuA).

It is found in the cell membrane. The catalysed reaction is Zn(2+)(out) + ATP(in) + H2O(in) = Zn(2+)(in) + ADP(in) + phosphate(in) + H(+)(in). Part of the ABC transporter complex ZnuABC involved in zinc import. Responsible for energy coupling to the transport system. The polypeptide is Zinc import ATP-binding protein ZnuC (Wigglesworthia glossinidia brevipalpis).